The following is a 1533-amino-acid chain: Actin cytoskeleton-regulatory complex protein pan-1 (1533 aa).

The tract at residues 1 to 204 is disordered; that stretch reads MYSNSNAFLG…PPPPVKPQAT (204 aa). Low complexity-rich tracts occupy residues 19–46, 53–136, 143–170, and 177–193; these read QQPQQQQQQYGAPSPFGQQGPMQPQPTG, GFAP…FQTG, IPQQFQQQQSFQQQQQQQQQPSIQQPQP, and QIQAPAQQPAPTAQGGI. An EH 1 domain is found at 244-333; that stretch reads DQARFETLFK…DHIKNEVSSM (90 aa). An EF-hand 1 domain is found at 277-312; sequence LDGDSLSQIWTLADTTRSGQLHFPEFALAMYLCNLK. Residues 345–359 show a composition bias toward low complexity; sequence AGSSSAPASNAPSFA. Disordered regions lie at residues 345–378 and 393–423; these read AGSSSAPASNAPSFATQQNTAAVPTIQQPQPQPS and QQTGFMGQNQGLQPQQTGFPGMNPQPTGYAG. Composition is skewed to polar residues over residues 360–378 and 393–410; these read TQQNTAAVPTIQQPQPQPS and QQTGFMGQNQGLQPQQTG. In terms of domain architecture, EH 2 spans 513-602; sequence EKTRYDALFR…PELVPPSARN (90 aa). Residues 546-581 form the EF-hand 2 domain; the sequence is LDKPDLERIWTLADNGNKGRLDLDEFAVAMHLIYRK. Positions 649–664 are enriched in basic and acidic residues; that stretch reads NRKDATVFKNNDEEVG. Disordered regions lie at residues 649–691, 894–917, 935–1306, and 1334–1533; these read NRKD…GDDL, IEDSLKEGAPDSTSEHEKRRWEDA, SRAA…STNP, and DAIS…RVLD. A coiled-coil region spans residues 690–890; it reads DLTIEQLRKK…RDVEDSVREF (201 aa). Composition is skewed to basic and acidic residues over residues 894–916 and 935–947; these read IEDSLKEGAPDSTSEHEKRRWED and SRAARIRSQDRQG. The span at 968 to 982 shows a compositional bias: low complexity; sequence TPSPSISRTSTPAST. The stretch at 1026-1209 forms a coiled coil; it reads ETAAQRAERE…KQLEAIDDED (184 aa). Composition is skewed to basic and acidic residues over residues 1031 to 1063, 1090 to 1164, and 1173 to 1203; these read RAERERAERAEKRRQAEEEDARREAERQAKLAE, GKAD…EEEK, and EAKEKEAQLAARRAEIEAARKREEELRKQLE. Positions 1204-1218 are enriched in acidic residues; it reads AIDDEDSSSSDEEGP. The span at 1221–1237 shows a compositional bias: polar residues; the sequence is ITPQASTPTVGGSQVGT. Low complexity predominate over residues 1279–1293; it reads SQSSEASTSSVAAPV. The segment covering 1348-1367 has biased composition (acidic residues); sequence DDDDDDWGSEKGSDDEDSDD. A compositionally biased stretch (pro residues) spans 1412 to 1495; the sequence is SSPPPPPAPV…PPPGGAPAPS (84 aa). The 18-residue stretch at 1500-1517 folds into the WH2 domain; sequence RPAGLLGEIQAGRALKKT.

This sequence belongs to the PAN1 family. In terms of assembly, component of the PAN1 actin cytoskeleton-regulatory complex.

It is found in the cell membrane. It localises to the endosome membrane. Its subcellular location is the cytoplasm. The protein localises to the cytoskeleton. The protein resides in the actin patch. Component of the PAN1 actin cytoskeleton-regulatory complex required for the internalization of endosomes during actin-coupled endocytosis. The complex links the site of endocytosis to the cell membrane-associated actin cytoskeleton. Mediates uptake of external molecules and vacuolar degradation of plasma membrane proteins. Plays a role in the proper organization of the cell membrane-associated actin cytoskeleton and promotes its destabilization. The chain is Actin cytoskeleton-regulatory complex protein pan-1 (pan-1) from Neurospora crassa (strain ATCC 24698 / 74-OR23-1A / CBS 708.71 / DSM 1257 / FGSC 987).